The primary structure comprises 390 residues: Probable purine permease 10 (390 aa).

A run of 10 helical transmembrane segments spans residues 44-64 (WLRV…ATIL), 78-98 (LATV…ILSF), 117-137 (VLVY…YSIG), 140-160 (YLPV…NAFF), 169-189 (LTPI…LLAF), 204-224 (YVKG…VLSL), 241-261 (VMDM…VGLF), 287-307 (LVWT…LIFE), 312-332 (FSNA…VIIF), and 336-356 (MNGL…SYVY). Residues 370–390 (EITTTESPDPPEAEESTWQSK) are disordered.

The protein belongs to the purine permeases (TC 2.A.7.14) family.

It is found in the membrane. The chain is Probable purine permease 10 (PUP10) from Arabidopsis thaliana (Mouse-ear cress).